The chain runs to 91 residues: uncharacterized protein (91 aa).

A helical membrane pass occupies residues 12–34; that stretch reads FAIVYANITFLFYYLLDFTLPFH.

The protein resides in the membrane. This is an uncharacterized protein from Saccharomyces cerevisiae (strain ATCC 204508 / S288c) (Baker's yeast).